A 172-amino-acid polypeptide reads, in one-letter code: S-ribosylhomocysteine lyase (172 aa).

Positions 54, 58, and 128 each coordinate Fe cation.

Belongs to the LuxS family. In terms of assembly, homodimer. Fe cation is required as a cofactor.

It catalyses the reaction S-(5-deoxy-D-ribos-5-yl)-L-homocysteine = (S)-4,5-dihydroxypentane-2,3-dione + L-homocysteine. Involved in the synthesis of autoinducer 2 (AI-2) which is secreted by bacteria and is used to communicate both the cell density and the metabolic potential of the environment. The regulation of gene expression in response to changes in cell density is called quorum sensing. Catalyzes the transformation of S-ribosylhomocysteine (RHC) to homocysteine (HC) and 4,5-dihydroxy-2,3-pentadione (DPD). In Vibrio vulnificus (strain CMCP6), this protein is S-ribosylhomocysteine lyase.